A 113-amino-acid chain; its full sequence is U11-theraphotoxin-Hhn1a (113 aa).

Residues 1–21 (MNTVRVTFLLVFVLAVSLGQA) form the signal peptide. Positions 22-74 (DKDENRMVMQEKTEQGKSYLDFAENLLLQKLEELEAKLLEEDSEESRNSRQKR) are excised as a propeptide. Intrachain disulfides connect C75-C90, C82-C95, and C89-C110.

This sequence belongs to the neurotoxin 14 (magi-1) family. 01 (HNTX-16) subfamily. As to expression, expressed by the venom gland.

It localises to the secreted. Probable ion channel inhibitor. In Cyriopagopus hainanus (Chinese bird spider), this protein is U11-theraphotoxin-Hhn1a.